Consider the following 397-residue polypeptide: Elongation factor Tu (397 aa).

A tr-type G domain is found at 10-206 (KPHCNIGTIG…AVDEYIPQPE (197 aa)). The tract at residues 19–26 (GHIDHGKT) is G1. 19 to 26 (GHIDHGKT) is a GTP binding site. Residue Thr-26 coordinates Mg(2+). The segment at 62–66 (GITIS) is G2. A G3 region spans residues 83–86 (DCPG). Residues 83–87 (DCPGH) and 138–141 (NKCD) each bind GTP. Residues 138 to 141 (NKCD) form a G4 region. The interval 176–178 (SAF) is G5.

Belongs to the TRAFAC class translation factor GTPase superfamily. Classic translation factor GTPase family. EF-Tu/EF-1A subfamily. As to quaternary structure, monomer.

It is found in the cytoplasm. The catalysed reaction is GTP + H2O = GDP + phosphate + H(+). GTP hydrolase that promotes the GTP-dependent binding of aminoacyl-tRNA to the A-site of ribosomes during protein biosynthesis. The sequence is that of Elongation factor Tu from Cutibacterium acnes (strain DSM 16379 / KPA171202) (Propionibacterium acnes).